The sequence spans 227 residues: Cytidylate kinase (227 aa).

Position 12 to 20 (12 to 20 (GPSGAGKGT)) interacts with ATP.

It belongs to the cytidylate kinase family. Type 1 subfamily.

The protein resides in the cytoplasm. It catalyses the reaction CMP + ATP = CDP + ADP. It carries out the reaction dCMP + ATP = dCDP + ADP. This is Cytidylate kinase from Escherichia fergusonii (strain ATCC 35469 / DSM 13698 / CCUG 18766 / IAM 14443 / JCM 21226 / LMG 7866 / NBRC 102419 / NCTC 12128 / CDC 0568-73).